A 338-amino-acid chain; its full sequence is 1-aminocyclopropane-1-carboxylate deaminase (338 aa).

Residue Lys51 is modified to N6-(pyridoxal phosphate)lysine. The active-site Nucleophile is Ser78.

The protein belongs to the ACC deaminase/D-cysteine desulfhydrase family. As to quaternary structure, homotrimer. Pyridoxal 5'-phosphate is required as a cofactor.

The catalysed reaction is 1-aminocyclopropane-1-carboxylate + H2O = 2-oxobutanoate + NH4(+). Functionally, catalyzes a cyclopropane ring-opening reaction, the irreversible conversion of 1-aminocyclopropane-1-carboxylate (ACC) to ammonia and alpha-ketobutyrate. Allows growth on ACC as a nitrogen source. In Burkholderia thailandensis (strain ATCC 700388 / DSM 13276 / CCUG 48851 / CIP 106301 / E264), this protein is 1-aminocyclopropane-1-carboxylate deaminase.